We begin with the raw amino-acid sequence, 188 residues long: dCTP deaminase (188 aa).

DCTP-binding positions include 111–116 (KSTYAR), 135–137 (TLE), glutamine 156, tyrosine 170, and glutamine 180. Catalysis depends on glutamate 137, which acts as the Proton donor/acceptor.

It belongs to the dCTP deaminase family. As to quaternary structure, homotrimer.

It carries out the reaction dCTP + H2O + H(+) = dUTP + NH4(+). Its pathway is pyrimidine metabolism; dUMP biosynthesis; dUMP from dCTP (dUTP route): step 1/2. Functionally, catalyzes the deamination of dCTP to dUTP. This Neisseria meningitidis serogroup B (strain ATCC BAA-335 / MC58) protein is dCTP deaminase.